Consider the following 236-residue polypeptide: Ubiquinone biosynthesis O-methyltransferase (236 aa).

Residues Arg39, Gly59, Asp80, and Met124 each coordinate S-adenosyl-L-methionine.

This sequence belongs to the methyltransferase superfamily. UbiG/COQ3 family.

The enzyme catalyses a 3-demethylubiquinol + S-adenosyl-L-methionine = a ubiquinol + S-adenosyl-L-homocysteine + H(+). It catalyses the reaction a 3-(all-trans-polyprenyl)benzene-1,2-diol + S-adenosyl-L-methionine = a 2-methoxy-6-(all-trans-polyprenyl)phenol + S-adenosyl-L-homocysteine + H(+). The protein operates within cofactor biosynthesis; ubiquinone biosynthesis. Functionally, O-methyltransferase that catalyzes the 2 O-methylation steps in the ubiquinone biosynthetic pathway. The sequence is that of Ubiquinone biosynthesis O-methyltransferase from Pseudoalteromonas translucida (strain TAC 125).